A 256-amino-acid chain; its full sequence is MPVTLEVSNHVAYVTLNRPEAMNSLDPESTADLTEIWARVRTDPDIRVAVLTGAGEKSFCTGTDMKKSPPPTECMAATYLRDGQPILPHMKMWKPIIAAINGYAVGGGLEIALACDLRIASTNAKFGLTEVKVASLAGLNGTQALPRAIPQAVAMKMLLTGEMISAEEALRYGLVSDVVEPSALADLARSYAEKIASAAPLSVQATKQAAVLGKDMPLEHGILYSHLLWGVLRDTEDRKEGFKAFGERRAPAFRGA.

Glu-110 (nucleophile) is an active-site residue. The Proton acceptor role is filled by Glu-130.

Belongs to the enoyl-CoA hydratase/isomerase family. As to quaternary structure, homotrimer.

The enzyme catalyses (2S)-[(R)-hydroxy(phenyl)methyl]succinyl-CoA = (E)-2-benzylidenesuccinyl-CoA + H2O. Its pathway is xenobiotic degradation; toluene degradation. Its function is as follows. Involved in an anaerobic toluene degradation pathway. Catalyzes the hydration of (E)-2-benzylidenesuccinyl-CoA to the corresponding alcohol intermediate, 2-(alpha-hydroxybenzyl)succinyl-CoA. Also accepts the N-acetylcysteamine (NAC) thioester of (E)-benzylidenesuccinate. The polypeptide is (E)-benzylidenesuccinyl-CoA hydratase (Thauera aromatica).